The sequence spans 3392 residues: Genome polyprotein (3392 aa).

Topologically, residues 1–101 (MNNQRKKTGR…LNIMNRRKRS (101 aa)) are cytoplasmic. The interval 33-74 (FSKGLLSGQGPMKLVMAFIAFLRFLAIPPTAGILARWSSFKK) is hydrophobic; homodimerization of capsid protein C. Positions 101-114 (SVTMLLMLLPTALA) are cleaved as a propeptide — ER anchor for the protein C, removed in mature form by serine protease NS3. Residues 102–119 (VTMLLMLLPTALAFHLTT) traverse the membrane as a helical segment. The Extracellular portion of the chain corresponds to 120 to 242 (RGGEPHMIVS…QIQKVETWAL (123 aa)). N-linked (GlcNAc...) asparagine; by host glycosylation occurs at Asn183. The helical transmembrane segment at 243-260 (RHPGFTVIALFLAHAIGT) threads the bilayer. Ser261 is a topological domain (cytoplasmic). Residues 262–280 (ITQKGIIFILLMLVTPSMA) form a helical membrane-spanning segment. Residues 281-725 (MRCVGIGNRD…VHQVFGTAYG (445 aa)) are Extracellular-facing. Disulfide bonds link Cys283-Cys310, Cys340-Cys401, Cys354-Cys385, and Cys372-Cys396. An N-linked (GlcNAc...) asparagine; by host glycan is attached at Asn347. Asn433 carries N-linked (GlcNAc...) asparagine; by host glycosylation. 2 disulfide bridges follow: Cys465–Cys565 and Cys582–Cys613. The helical intramembrane region spans 726–746 (VLFSGVSWTMKIGIGILLTWL). The Extracellular portion of the chain corresponds to 747–752 (GLNSRS). The segment at residues 753-775 (TSLSMTCIAVGMVTLYLGVMVQA) is an intramembrane region (helical). Over 776 to 1125 (DSGCVINWKG…KEENLVRSMV (350 aa)) the chain is Extracellular. 6 disulfides stabilise this stretch: Cys779–Cys790, Cys830–Cys918, Cys954–Cys998, Cys1055–Cys1104, Cys1066–Cys1088, and Cys1087–Cys1091. Residues Asn905 and Asn982 are each glycosylated (N-linked (GlcNAc...) asparagine; by host). Residues 1126-1146 (SAGSGEVDSFSLGILCVSIMI) traverse the membrane as a helical segment. Topologically, residues 1147–1157 (EEVMRSRWSRK) are cytoplasmic. A helical transmembrane segment spans residues 1158 to 1178 (MLMTGTLAVFLLLIMGQLTWN). Residues 1179–1199 (DLIRLCIMVGANASDKMGMGT) are Lumenal-facing. A glycan (N-linked (GlcNAc...) asparagine; by host) is linked at Asn1190. The helical transmembrane segment at 1200 to 1220 (TYLALMATFKMRPMFAVGLLF) threads the bilayer. The Cytoplasmic segment spans residues 1221–1289 (RRLTSREVLL…TFIKTTLSLD (69 aa)). A helical membrane pass occupies residues 1290 to 1310 (YAWKTTAMVLSIVSLFPLCLS). Topologically, residues 1311 to 1315 (TTSQK) are lumenal. Residues 1316–1336 (TTWLPVLLGSFGCKPLTMFLI) form a helical membrane-spanning segment. Topologically, residues 1337-1346 (TENEIWGRKS) are cytoplasmic. Residues 1347–1367 (WPLNEGIMAIGIVSILLSSLL) form a helical membrane-spanning segment. Residues 1368–1370 (KND) are Lumenal-facing. Residues 1371 to 1391 (VPLAGPLIAGGMLIACYVISG) traverse the membrane as a helical segment. The Cytoplasmic portion of the chain corresponds to 1392–1447 (SSADLSLEKAAEVSWEEEAEHSGTSHNILVEVQDDGTMKIKDEERDDTLTILLKAT). Residues 1398 to 1437 (LEKAAEVSWEEEAEHSGTSHNILVEVQDDGTMKIKDEERD) form an interacts with and activates NS3 protease region. An intramembrane region (helical) is located at residues 1448–1468 (LLAVSGVYPMSIPATLFVWYF). Residues 1469-2148 (WQKKKQRSGV…MEELPDTIET (680 aa)) lie on the Cytoplasmic side of the membrane. The region spanning 1476–1653 (SGVLWDTPSP…KASQEGPLPE (178 aa)) is the Peptidase S7 domain. Active-site charge relay system; for serine protease NS3 activity residues include His1526, Asp1550, and Ser1610. A Helicase ATP-binding domain is found at 1656-1812 (DEVFKKRNLT…QSNAVIQDEE (157 aa)). 1669–1676 (LHPGSGKT) is an ATP binding site. Positions 1760 to 1763 (DEAH) match the DEAH box motif. The Helicase C-terminal domain maps to 1822–1989 (SGYDWITDFP…IIPALFEPER (168 aa)). N6-acetyllysine; by host is present on Lys1864. The helical transmembrane segment at 2149–2169 (LMLLALIAVLTGGVTLFFLSG) threads the bilayer. Residues 2170–2171 (KG) are Lumenal-facing. Residues 2172 to 2192 (LGKTSIGLLCVTASSALLWMA) constitute an intramembrane region (helical). A topological domain (lumenal) is located at residue Ser2193. A helical transmembrane segment spans residues 2194–2214 (VEPHWIAASIILEFFLMVLLI). Topologically, residues 2215–2229 (PEPDRQRTPQDNQLA) are cytoplasmic. A helical membrane pass occupies residues 2230-2250 (YVVIGLLFMILTVAANEMGLL). At 2251-2276 (ETTKKDLGIGHVAAENHQHATILDVD) the chain is on the lumenal side. The helical intramembrane region spans 2277–2297 (LHPASAWTLYAVATTVITPMM). Topologically, residues 2298 to 2349 (RHTIENTTANISLTAIANQAAILMGLDKGWPISKMDLGVPLLALGCYSQVNP) are lumenal. Asn2303 and Asn2307 each carry an N-linked (GlcNAc...) asparagine; by host glycan. Residues 2350–2370 (LTLTAAVLMLVAHYAIIGPGL) form a helical membrane-spanning segment. Residues 2371-2415 (QAKATREAQKRTAAGIMKNPTVDGIVAIDLDPVVYDAKFEKQLGQ) lie on the Cytoplasmic side of the membrane. Residues 2416–2436 (IMLLILCTSQILLMRTTWALC) traverse the membrane as a helical segment. The Lumenal portion of the chain corresponds to 2437 to 2461 (ESITLATGPLTTLWEGSPGKFWNTT). A glycan (N-linked (GlcNAc...) asparagine; by host) is linked at Asn2459. The chain crosses the membrane as a helical span at residues 2462–2482 (IAVSMANIFRGSYLAGAGLAF). Residues 2483 to 3392 (SLMKSLGGGR…NESDPEGALW (910 aa)) are Cytoplasmic-facing. An mRNA cap 0-1 NS5-type MT domain is found at 2495-2756 (TGAQGETLGE…DVDLGAGTRH (262 aa)). The S-adenosyl-L-methionine site is built by Ser2549, Gly2579, Trp2580, Thr2597, Lys2598, Asp2624, Val2625, Ile2640, and Tyr2711. The region spanning 3021–3170 (NMYADDTAGW…PIDDRFATAL (150 aa)) is the RdRp catalytic domain.

This sequence in the N-terminal section; belongs to the class I-like SAM-binding methyltransferase superfamily. mRNA cap 0-1 NS5-type methyltransferase family. In terms of assembly, capsid protein C: Homodimer. Interacts (via N-terminus) with host EXOC1 (via C-terminus); this interaction results in EXOC1 degradation through the proteasome degradation pathway. Forms heterodimers with envelope protein E in the endoplasmic reticulum and Golgi. As to quaternary structure, homodimer; in the endoplasmic reticulum and Golgi. Interacts with protein prM. Interacts with non-structural protein 1. In terms of assembly, homodimer; Homohexamer when secreted. Interacts with envelope protein E. Interacts (via N-terminus) with serine protease NS3. As to quaternary structure, forms a heterodimer with serine protease NS3. May form homooligomers. In terms of assembly, forms a heterodimer with NS2B. Interacts with NS4B. Interacts with unphosphorylated RNA-directed RNA polymerase NS5; this interaction stimulates RNA-directed RNA polymerase NS5 guanylyltransferase activity. Interacts with host SHFL. Interacts with host MAVS; this interaction inhibits the synthesis of IFN-beta. Interacts with host SHFL. Interacts with host AUP1; the interaction occurs in the presence of Dengue virus NS4B and induces lipophagy which facilitates production of virus progeny particles. As to quaternary structure, interacts with serine protease NS3. In terms of assembly, homodimer. Interacts with host STAT2; this interaction inhibits the phosphorylation of the latter, and, when all viral proteins are present (polyprotein), targets STAT2 for degradation. Interacts with serine protease NS3. Specific enzymatic cleavages in vivo yield mature proteins. Cleavages in the lumen of endoplasmic reticulum are performed by host signal peptidase, wereas cleavages in the cytoplasmic side are performed by the Serine protease NS3. Signal cleavage at the 2K-4B site requires a prior NS3 protease-mediated cleavage at the 4A-2K site. In terms of processing, a C-terminally truncated form of non-structural protein 2A, results from partial cleavage by NS3. Post-translationally, cleaved in post-Golgi vesicles by a host furin, releasing the mature small envelope protein M, and peptide pr. This cleavage is incomplete as up to 30% of viral particles still carry uncleaved prM. The excreted form is glycosylated and this is required for efficient secretion of the protein from infected cells. In terms of processing, phosphorylated on serines residues. This phosphorylation may trigger NS5 nuclear localization. Post-translationally, N-glycosylated. Acetylated by host KAT5. Acetylation modulates NS3 RNA-binding and unwinding activities and plays an important positive role for viral replication.

Its subcellular location is the virion. The protein localises to the host nucleus. The protein resides in the secreted. It localises to the virion membrane. It is found in the host endoplasmic reticulum membrane. Its subcellular location is the host mitochondrion. The enzyme catalyses Selective hydrolysis of -Xaa-Xaa-|-Yaa- bonds in which each of the Xaa can be either Arg or Lys and Yaa can be either Ser or Ala.. It carries out the reaction RNA(n) + a ribonucleoside 5'-triphosphate = RNA(n+1) + diphosphate. It catalyses the reaction a ribonucleoside 5'-triphosphate + H2O = a ribonucleoside 5'-diphosphate + phosphate + H(+). The catalysed reaction is ATP + H2O = ADP + phosphate + H(+). The enzyme catalyses a 5'-end (5'-triphosphoguanosine)-ribonucleoside in mRNA + S-adenosyl-L-methionine = a 5'-end (N(7)-methyl 5'-triphosphoguanosine)-ribonucleoside in mRNA + S-adenosyl-L-homocysteine. It carries out the reaction a 5'-end (N(7)-methyl 5'-triphosphoguanosine)-ribonucleoside in mRNA + S-adenosyl-L-methionine = a 5'-end (N(7)-methyl 5'-triphosphoguanosine)-(2'-O-methyl-ribonucleoside) in mRNA + S-adenosyl-L-homocysteine + H(+). Plays a role in virus budding by binding to membrane and gathering the viral RNA into a nucleocapsid that forms the core of a mature virus particle. During virus entry, may induce genome penetration in host cytoplasm after hemifusion induced by surface proteins. Can migrate tot cell nucleus where it modulates host functions. In terms of biological role, prevents premature fusion activity of envelope proteins in trans Golgi by binding to envelope protein E at pH6.0. After virion release in extracellular space gets dissociated from E dimers. Its function is as follows. Acts as a chaperone for envelope protein E during intracellular virion assembly by masking and inactivating envelope protein E fusion peptide. prM is the only viral peptide matured by host furin in the trans-Golgi network. Presumably to avoid catastrophic activation of the viral fusion activity in acidic GolGi compartment prior to virion release. prM-E cleavage is ineficient, and many virions are only partially matured. These uncleaved prM would play a role in immune evasion. Functionally, may play a role in virus budding. Exerts cytotoxic effects by activating a mitochondrial apoptotic pathway through M extodomain. May display a viroporin activity. Binds to host cell surface receptor and mediates fusion between viral and cellular membranes. Envelope protein is synthesized in the endoplasmic reticulum in the form of heterodimer with protein prM. They play a role in virion budding in the ER, and the newly formed immature particle is covered with 60 spikes composed of heterodimer between precursor prM and envelope protein E. The virion is transported to the Golgi apparatus where the low pH causes dissociation of PrM-E heterodimers and formation of E homodimers. prM-E cleavage is ineficient, and many virions are only partially matured. These uncleaved prM would play a role in immune evasion. In terms of biological role, involved in immune evasion, pathogenesis and viral replication. Once cleaved off the polyprotein, is targeted to three destinations: the viral replication cycle, the plasma membrane and the extracellular compartment. May play a role in viral genome replication. Assist membrane bending and envelopment of genomic RNA at the endoplasmic reticulum. Excreted as a hexameric lipoparticle that plays a role against host immune response. Its function is as follows. Component of the viral RNA replication complex that functions in virion assembly and antagonizes the host immune response. Functionally, required cofactor for the serine protease function of NS3. May have membrane-destabilizing activity and form viroporins. Displays three enzymatic activities: serine protease, NTPase and RNA helicase. NS3 serine protease, in association with NS2B, performs its autocleavage and cleaves the polyprotein at dibasic sites in the cytoplasm: C-prM, NS2A-NS2B, NS2B-NS3, NS3-NS4A, NS4A-2K and NS4B-NS5. NS3 RNA helicase binds RNA and unwinds dsRNA in the 3' to 5' direction. In terms of biological role, regulates the ATPase activity of the NS3 helicase activity. NS4A allows NS3 helicase to conserve energy during unwinding. Plays a role in the inhibition of the host innate immune response. Interacts with host MAVS and thereby prevents the interaction between RIGI and MAVS. In turn, IFN-beta production is impaired. Interacts with host AUP1 which mediates induction of lipophagy in host cells and facilitates production of virus progeny particles. Its function is as follows. Functions as a signal peptide for NS4B and is required for the interferon antagonism activity of the latter. Functionally, inhibits interferon (IFN)-induced host STAT1 phosphorylation and nuclear translocation, thereby preventing the establishment of cellular antiviral state by blocking the IFN-alpha/beta pathway. Replicates the viral (+) and (-) genome, and performs the capping of genomes in the cytoplasm. NS5 methylates viral RNA cap at guanine N-7 and ribose 2'-O positions. Besides its role in RNA genome replication, also prevents the establishment of cellular antiviral state by blocking the interferon-alpha/beta (IFN-alpha/beta) signaling pathway. Inhibits host TYK2 and STAT2 phosphorylation, thereby preventing activation of JAK-STAT signaling pathway. In Dengue virus type 1 (strain Brazil/97-11/1997) (DENV-1), this protein is Genome polyprotein.